Here is a 179-residue protein sequence, read N- to C-terminus: uncharacterized protein (179 aa).

The next 3 membrane-spanning stretches (helical) occupy residues 29-49 (LLGISFFCLVIIMATSLGPLI), 76-96 (AKHMLVFWMVFGILTSLDAYS), and 97-117 (GAIISFIPLWYTMKFFFLLWA).

The protein belongs to the DP1 family.

It is found in the membrane. This is an uncharacterized protein from Encephalitozoon cuniculi (strain GB-M1) (Microsporidian parasite).